The sequence spans 175 residues: Nudix hydrolase 25 (175 aa).

In terms of domain architecture, Nudix hydrolase spans Gly7–Lys155. Mn(2+) contacts are provided by Gly40, Glu55, and Glu59. Residues Gly40–Gly61 carry the Nudix box motif.

The protein belongs to the Nudix hydrolase family. It depends on Mn(2+) as a cofactor.

It catalyses the reaction P(1),P(4)-bis(5'-guanosyl) tetraphosphate + H2O = GMP + GTP + 2 H(+). Mediates the hydrolysis of diadenosine 5',5''-P(1)P(4) tetraphosphate (Ap(4)A), a signaling molecule involved in regulation of DNA replication and repair. The chain is Nudix hydrolase 25 from Arabidopsis thaliana (Mouse-ear cress).